We begin with the raw amino-acid sequence, 282 residues long: Deoxyribonuclease-1 (282 aa).

Positions 1-22 (MRGARLTGALLALAGLLQVALS) are cleaved as a signal peptide. Asn-40 is a glycosylation site (N-linked (GlcNAc...) asparagine). Glu-100 is a catalytic residue. Residues Cys-123 and Cys-126 are joined by a disulfide bond. N-linked (GlcNAc...) asparagine glycosylation is present at Asn-128. The active site involves His-156. Cys-195 and Cys-231 form a disulfide bridge.

This sequence belongs to the DNase I family. The cofactor is Ca(2+). Mg(2+) is required as a cofactor.

The protein resides in the secreted. Its subcellular location is the zymogen granule. The protein localises to the nucleus envelope. The catalysed reaction is Endonucleolytic cleavage to 5'-phosphodinucleotide and 5'-phosphooligonucleotide end-products.. Serum endocuclease secreted into body fluids by a wide variety of exocrine and endocrine organs. Expressed by non-hematopoietic tissues and preferentially cleaves protein-free DNA. Among other functions, seems to be involved in cell death by apoptosis. Binds specifically to G-actin and blocks actin polymerization. Together with DNASE1L3, plays a key role in degrading neutrophil extracellular traps (NETs). NETs are mainly composed of DNA fibers and are released by neutrophils to bind pathogens during inflammation. Degradation of intravascular NETs by DNASE1 and DNASE1L3 is required to prevent formation of clots that obstruct blood vessels and cause organ damage following inflammation. This Equus caballus (Horse) protein is Deoxyribonuclease-1 (DNASE1).